A 274-amino-acid polypeptide reads, in one-letter code: Acyl-[acyl-carrier-protein]--UDP-N-acetylglucosamine O-acyltransferase (274 aa).

The protein belongs to the transferase hexapeptide repeat family. LpxA subfamily. Homotrimer.

Its subcellular location is the cytoplasm. It catalyses the reaction a (3R)-hydroxyacyl-[ACP] + UDP-N-acetyl-alpha-D-glucosamine = a UDP-3-O-[(3R)-3-hydroxyacyl]-N-acetyl-alpha-D-glucosamine + holo-[ACP]. Its pathway is glycolipid biosynthesis; lipid IV(A) biosynthesis; lipid IV(A) from (3R)-3-hydroxytetradecanoyl-[acyl-carrier-protein] and UDP-N-acetyl-alpha-D-glucosamine: step 1/6. Its function is as follows. Involved in the biosynthesis of lipid A, a phosphorylated glycolipid that anchors the lipopolysaccharide to the outer membrane of the cell. This chain is Acyl-[acyl-carrier-protein]--UDP-N-acetylglucosamine O-acyltransferase, found in Bartonella quintana (strain Toulouse) (Rochalimaea quintana).